The chain runs to 378 residues: MSTMSDLFPDLVEEILSRVPITSLKAVKLTCKQWNDLSKDSSFTKNHYGKEAKEIQVIMICDLKACLMSVNLHNHKDLADPSIKQIGKLNQVEIDSVFHCDGLLLLLLCNPKDNSKLMVWNPYLGQTRWIQPRNNSHKHRPAGRFNHRPAGRFYMGYDSNNNHKILWFSSMYREYEIYDFKSDAWTVIDVNTDQDHIIDNQRVSLKGNVYFIAHDILKEEAFLLSFDFTCERFGPSLPLPFHCCHEDTVLLSTVREEQLAVLFQKSDAYEMGIWITTKIELNIVLWSKFLKVDMTLPNSYWFEDLSFFLVDEKKKVAMVSELDIETCKNYKTYILGENGYYREVDLRKSKGCVYLCVLMFQVWCKSSKVPVLARCERK.

In terms of domain architecture, F-box spans 1-47 (MSTMSDLFPDLVEEILSRVPITSLKAVKLTCKQWNDLSKDSSFTKNH).

In Arabidopsis thaliana (Mouse-ear cress), this protein is Putative F-box protein At5g51000.